Here is a 258-residue protein sequence, read N- to C-terminus: UPF0246 protein Jann_0444 (258 aa).

Belongs to the UPF0246 family.

In Jannaschia sp. (strain CCS1), this protein is UPF0246 protein Jann_0444.